The sequence spans 80 residues: EMBRYO SURROUNDING FACTOR 1-like protein 1 (80 aa).

A signal peptide spans 1 to 22 (MKSSHIALLCIVVLSLFALHEC). 4 disulfide bridges follow: Cys38–Cys52, Cys43–Cys78, Cys50–Cys74, and Cys53–Cys64.

This sequence belongs to the MEG family. In terms of tissue distribution, expressed in leaves.

The protein is EMBRYO SURROUNDING FACTOR 1-like protein 1 (ESFL1) of Arabidopsis thaliana (Mouse-ear cress).